Consider the following 401-residue polypeptide: Dual-specificity RNA methyltransferase RlmN (401 aa).

The active-site Proton acceptor is the glutamate 114. The Radical SAM core domain maps to aspartate 120–aspartate 365. Cysteine 127 and cysteine 370 are oxidised to a cystine. Residues cysteine 134, cysteine 138, and cysteine 141 each contribute to the [4Fe-4S] cluster site. Residues glycine 187 to glutamate 188, serine 219, serine 241 to histidine 243, and asparagine 327 contribute to the S-adenosyl-L-methionine site. The S-methylcysteine intermediate role is filled by cysteine 370.

This sequence belongs to the radical SAM superfamily. RlmN family. [4Fe-4S] cluster is required as a cofactor.

It is found in the cytoplasm. The catalysed reaction is adenosine(2503) in 23S rRNA + 2 reduced [2Fe-2S]-[ferredoxin] + 2 S-adenosyl-L-methionine = 2-methyladenosine(2503) in 23S rRNA + 5'-deoxyadenosine + L-methionine + 2 oxidized [2Fe-2S]-[ferredoxin] + S-adenosyl-L-homocysteine. The enzyme catalyses adenosine(37) in tRNA + 2 reduced [2Fe-2S]-[ferredoxin] + 2 S-adenosyl-L-methionine = 2-methyladenosine(37) in tRNA + 5'-deoxyadenosine + L-methionine + 2 oxidized [2Fe-2S]-[ferredoxin] + S-adenosyl-L-homocysteine. Its function is as follows. Specifically methylates position 2 of adenine 2503 in 23S rRNA and position 2 of adenine 37 in tRNAs. m2A2503 modification seems to play a crucial role in the proofreading step occurring at the peptidyl transferase center and thus would serve to optimize ribosomal fidelity. This chain is Dual-specificity RNA methyltransferase RlmN, found in Xanthomonas campestris pv. campestris (strain B100).